Consider the following 63-residue polypeptide: Large ribosomal subunit protein bL35 (63 aa).

This sequence belongs to the bacterial ribosomal protein bL35 family.

This chain is Large ribosomal subunit protein bL35, found in Campylobacter jejuni subsp. jejuni serotype O:2 (strain ATCC 700819 / NCTC 11168).